A 193-amino-acid chain; its full sequence is dCTP deaminase (193 aa).

Residues 110-115, Asp-128, 136-138, Tyr-171, Lys-178, and Gln-182 each bind dCTP; these read RSSLAR and VLE. Glu-138 serves as the catalytic Proton donor/acceptor. A disordered region spans residues 170–193; that stretch reads PYNSRQDAKYRGQQGAVASRIDKD.

It belongs to the dCTP deaminase family. Homotrimer.

It carries out the reaction dCTP + H2O + H(+) = dUTP + NH4(+). The protein operates within pyrimidine metabolism; dUMP biosynthesis; dUMP from dCTP (dUTP route): step 1/2. Its function is as follows. Catalyzes the deamination of dCTP to dUTP. The protein is dCTP deaminase of Yersinia enterocolitica serotype O:8 / biotype 1B (strain NCTC 13174 / 8081).